Consider the following 221-residue polypeptide: NEDD4 family-interacting protein 1 (221 aa).

An N-acetylalanine modification is found at Ala-2. The interval 2–41 is interaction with UBE2L3; that stretch reads ALALAALAAVEPACGSGYQQLQNEEEPGEPEQTAGDAPPP. The Cytoplasmic segment spans residues 2–116; sequence ALALAALAAV…TDQLRIGNDG (115 aa). The interval 18 to 44 is disordered; that stretch reads GYQQLQNEEEPGEPEQTAGDAPPPYSS. 3 short sequence motifs (PPxY motif) span residues 39 to 42, 64 to 67, and 74 to 76; these read PPPY, PPSY, and PSY. Residues 42 to 76 are interaction with ITCH; that stretch reads YSSITAESAAYFDYKDESGFPKPPSYNVATTLPSY. A helical membrane pass occupies residues 117-137; sequence IFMLTFFMAFLFNWIGFFLSF. At 138 to 143 the chain is on the extracellular side; sequence CLTTSA. A helical transmembrane segment spans residues 144 to 164; the sequence is AGRYGAISGFGLSLIKWILIV. The Cytoplasmic segment spans residues 165–172; it reads RFSTYFPG. Residues 173–193 form a helical membrane-spanning segment; it reads YFDGQYWLWWVFLVLGFLLFL. Residues 194-221 lie on the Extracellular side of the membrane; it reads RGFINYAKVRKMPETFSNLPRTRVLFIY.

As to quaternary structure, forms heterodimers with NDFIP2. Interacts with several E3 ubiquitin-protein ligases, including ITCH, NEDD4, NEDD4L and WWP2. The interaction with NEDD4, NEDD4L and ITCH leads to relocalization of these proteins to exosomes and eventually to exosomal secretion. Interacts with U2SURP. Interacts with SLC11A2/DMT1. Interacts with PTEN. May interact with phosphorylated EGFR. Interacts with BRAT1. Interacts with KCNH2. Interacts with MAVS. Part of a complex containing ITCH, NDFIP1 and MAP3K7. Interacts (via N-terminus) with UBE2L3; the interaction mediates recruitment of UBE2L3 to ITCH. Post-translationally, ubiquitinated by NEDD4; mono-, di- and polyubiquitinated forms are detected. Ubiquitination regulates its degradation. In terms of processing, undergoes transient tyrosine phosphorylation following EGF stimulation, most probably by catalyzed by SRC. Phosphorylation SRC is enhanced in the presence of NDFIP2 which may act as a scaffold to recruit SRC to NDFIP1. In terms of tissue distribution, highly expressed in embryonic and early postnatal cortex (at protein level). Widely expressed. Hardly detectable in resting T-cells; up-regulated in T-cells in response to activation.

The protein resides in the endosome membrane. The protein localises to the golgi apparatus membrane. It localises to the synapse. It is found in the synaptosome. Its subcellular location is the cell projection. The protein resides in the dendrite. The protein localises to the secreted. Activates HECT domain-containing E3 ubiquitin-protein ligases, including NEDD4 and ITCH, and consequently modulates the stability of their targets. As a result, controls many cellular processes. Prevents chronic T-helper cell-mediated inflammation by activating ITCH and thus controlling JUNB degradation. Promotes pancreatic beta cell death through degradation of JUNB and inhibition of the unfolded protein response, leading to reduction of insulin secretion. Restricts the production of pro-inflammatory cytokines in effector Th17 T-cells by promoting ITCH-mediated ubiquitination and degradation of RORC. Together with NDFIP2, limits the cytokine signaling and expansion of effector Th2 T-cells by promoting degradation of JAK1, probably by ITCH- and NEDD4L-mediated ubiquitination. Regulates peripheral T-cell tolerance to self and foreign antigens, forcing the exit of naive CD4+ T-cells from the cell cycle before they become effector T-cells. Negatively regulates RLR-mediated antiviral response by promoting SMURF1-mediated ubiquitination and subsequent degradation of MAVS. Negatively regulates KCNH2 potassium channel activity by decreasing its cell-surface expression and interfering with channel maturation through recruitment of NEDD4L to the Golgi apparatus where it mediates KCNH2 degradation. In cortical neurons, mediates the ubiquitination of the divalent metal transporter SLC11A2/DMT1 by NEDD4L, leading to its down-regulation and protection of the cells from cobalt and iron toxicity. Important for normal development of dendrites and dendritic spines in cortex. Enhances the ubiquitination of BRAT1 mediated by: NEDD4, NEDD4L and ITCH and is required for the nuclear localization of ubiquitinated BRAT1. Enhances the ITCH-mediated ubiquitination of MAP3K7 by recruiting E2 ubiquitin-conjugating enzyme UBE2L3 to ITCH. Modulates EGFR signaling through multiple pathways. In particular, may regulate the ratio of AKT1-to-MAPK8 signaling in response to EGF, acting on AKT1 probably through PTEN destabilization and on MAPK8 through ITCH-dependent MAP2K4 inactivation. As a result, may control cell growth rate. Inhibits cell proliferation by promoting PTEN nuclear localization and changing its signaling specificity. The polypeptide is NEDD4 family-interacting protein 1 (Ndfip1) (Mus musculus (Mouse)).